The sequence spans 463 residues: Toxin CaTX-A (463 aa).

The first 18 residues, 1–18 (MSRGYSLHLVLFLVLSTA), serve as a signal peptide directing secretion.

It belongs to the jellyfish toxin family. Type II subfamily. As to quaternary structure, oligomer. In terms of processing, contains disulfide bonds. It is suggested that CaTX-B is synthesized in the tentacle, is modified (become CaTX-A) and then migrates to the nematocyst.

The protein resides in the secreted. It is found in the nematocyst. Its subcellular location is the target cell membrane. Has potent hemolytic activity. Is lethal to crayfish. Causes cutaneous inflammation in humans. May act as a pore-forming toxin, disrupting normal transmembrane ion concentration gradients in susceptible cells. The polypeptide is Toxin CaTX-A (Carybdea alata (Hawaiian box jellyfish)).